Consider the following 159-residue polypeptide: Large ribosomal subunit protein uL22 (159 aa).

It belongs to the universal ribosomal protein uL22 family. As to quaternary structure, part of the 50S ribosomal subunit.

Functionally, this protein binds specifically to 23S rRNA. It makes multiple contacts with different domains of the 23S rRNA in the assembled 50S subunit and ribosome. Its function is as follows. The globular domain of the protein is located near the polypeptide exit tunnel on the outside of the subunit, while an extended beta-hairpin is found that lines the wall of the exit tunnel in the center of the 70S ribosome. This chain is Large ribosomal subunit protein uL22, found in Methanopyrus kandleri (strain AV19 / DSM 6324 / JCM 9639 / NBRC 100938).